The primary structure comprises 77 residues: U8-lycotoxin-Ls1u (77 aa).

An N-terminal signal peptide occupies residues 1–20; the sequence is MKLIIFTGLVLFAIVSLIEA. Positions 21-26 are excised as a propeptide; that stretch reads QAENEK.

Belongs to the neurotoxin 19 (CSTX) family. 08 (U8-Lctx) subfamily. Post-translationally, contains 4 disulfide bonds. As to expression, expressed by the venom gland.

It is found in the secreted. This Lycosa singoriensis (Wolf spider) protein is U8-lycotoxin-Ls1u.